A 120-amino-acid chain; its full sequence is Putative ferric transport system permease-like protein AfuB (120 aa).

Over 1 to 38 (MESLPGQIDKSLDEASLSLRAGSLRTITHILLPLLRPA) the chain is Cytoplasmic. The ABC transmembrane type-1 domain maps to 1–102 (MESLPGQIDK…VVMLAIIFIF (102 aa)). Residues 39 to 59 (ILSALIYSFVRAITTVSAIVF) form a helical membrane-spanning segment. At 60–81 (LVTPDTRVATAYILNRVEDGEY) the chain is on the periplasmic side. Residues 82 to 102 (GVAIAYGSILIVVMLAIIFIF) form a helical membrane-spanning segment. Residues 103–120 (DWLIGESRTSRSKAKNQA) are Cytoplasmic-facing.

The protein belongs to the binding-protein-dependent transport system permease family. FbpB subfamily.

The protein localises to the cell inner membrane. Functionally, a severely truncated paralog of the AfuB uptake protein, homologous only to the last 20% of the intact protein in Actinobacillus. The sequence is that of Putative ferric transport system permease-like protein AfuB (afuB) from Escherichia coli (strain K12).